Here is a 341-residue protein sequence, read N- to C-terminus: Glucokinase (341 aa).

18-23 (GDIGGT) contributes to the ATP binding site.

It belongs to the bacterial glucokinase family.

It localises to the cytoplasm. It carries out the reaction D-glucose + ATP = D-glucose 6-phosphate + ADP + H(+). This is Glucokinase from Rhizobium leguminosarum bv. trifolii (strain WSM2304).